Reading from the N-terminus, the 235-residue chain is Uridylate kinase (235 aa).

Residue 8–11 (KFSG) participates in ATP binding. The interval 16–21 (GAEGYG) is involved in allosteric activation by GTP. Residue Gly-50 coordinates UMP. ATP is bound by residues Gly-51 and Arg-55. UMP is bound by residues Asp-71 and 132-139 (TGNPYFTT). ATP is bound by residues Thr-159, Tyr-165, and Asp-168.

It belongs to the UMP kinase family. In terms of assembly, homohexamer.

It is found in the cytoplasm. The catalysed reaction is UMP + ATP = UDP + ADP. It functions in the pathway pyrimidine metabolism; CTP biosynthesis via de novo pathway; UDP from UMP (UMPK route): step 1/1. Its activity is regulated as follows. Allosterically activated by GTP. Inhibited by UTP. Its function is as follows. Catalyzes the reversible phosphorylation of UMP to UDP. The polypeptide is Uridylate kinase (Aliarcobacter butzleri (strain RM4018) (Arcobacter butzleri)).